The sequence spans 221 residues: Triosephosphate isomerase (221 aa).

Residue 8 to 10 (NLK) participates in substrate binding. The active-site Electrophile is the histidine 92. Glutamate 140 functions as the Proton acceptor in the catalytic mechanism. Substrate contacts are provided by residues isoleucine 145, glycine 180, and 201-202 (AS).

Belongs to the triosephosphate isomerase family. In terms of assembly, homotetramer; dimer of dimers.

The protein resides in the cytoplasm. The enzyme catalyses D-glyceraldehyde 3-phosphate = dihydroxyacetone phosphate. It functions in the pathway carbohydrate biosynthesis; gluconeogenesis. Its pathway is carbohydrate degradation; glycolysis; D-glyceraldehyde 3-phosphate from glycerone phosphate: step 1/1. Involved in the gluconeogenesis. Catalyzes stereospecifically the conversion of dihydroxyacetone phosphate (DHAP) to D-glyceraldehyde-3-phosphate (G3P). This Methanococcoides burtonii (strain DSM 6242 / NBRC 107633 / OCM 468 / ACE-M) protein is Triosephosphate isomerase.